The following is a 462-amino-acid chain: UDP-N-acetylmuramoylalanine--D-glutamate ligase (462 aa).

ATP is bound at residue 117–123 (GTNGKTT).

This sequence belongs to the MurCDEF family.

Its subcellular location is the cytoplasm. The catalysed reaction is UDP-N-acetyl-alpha-D-muramoyl-L-alanine + D-glutamate + ATP = UDP-N-acetyl-alpha-D-muramoyl-L-alanyl-D-glutamate + ADP + phosphate + H(+). It functions in the pathway cell wall biogenesis; peptidoglycan biosynthesis. Functionally, cell wall formation. Catalyzes the addition of glutamate to the nucleotide precursor UDP-N-acetylmuramoyl-L-alanine (UMA). This is UDP-N-acetylmuramoylalanine--D-glutamate ligase from Synechococcus sp. (strain CC9902).